The following is a 660-amino-acid chain: Pentatricopeptide repeat-containing protein At1g03560, mitochondrial (660 aa).

Residues 1–12 constitute a mitochondrion transit peptide; the sequence is MRRFYRKPFSVP. PPR repeat units follow at residues 151-185, 186-220, 221-255, 256-290, 291-325, 326-360, 361-395, 396-430, 431-465, 466-496, 502-536, 537-571, 574-605, and 606-640; these read NLEC…EFPM, TVSA…GIEP, TLYT…RIKP, DIVT…GHEA, DKIT…GIQV, PPHA…GSKP, NVAI…GFKP, DVVT…GLAI, NSMF…GCTR, DSYC…MEEE, TVYT…GITP, TAAC…GVIL, ACED…GREV, and PGRI…GYER.

The protein belongs to the PPR family. P subfamily.

It localises to the mitochondrion. The chain is Pentatricopeptide repeat-containing protein At1g03560, mitochondrial from Arabidopsis thaliana (Mouse-ear cress).